Reading from the N-terminus, the 1304-residue chain is DNA-directed RNA polymerase subunit beta' (1304 aa).

Residues cysteine 60, cysteine 62, cysteine 75, and cysteine 78 each contribute to the Zn(2+) site. Mg(2+)-binding residues include aspartate 541, aspartate 543, and aspartate 545. Residues cysteine 887, cysteine 963, cysteine 970, and cysteine 973 each contribute to the Zn(2+) site.

Belongs to the RNA polymerase beta' chain family. In terms of assembly, the RNAP catalytic core consists of 2 alpha, 1 beta, 1 beta' and 1 omega subunit. When a sigma factor is associated with the core the holoenzyme is formed, which can initiate transcription. Mg(2+) serves as cofactor. It depends on Zn(2+) as a cofactor.

The catalysed reaction is RNA(n) + a ribonucleoside 5'-triphosphate = RNA(n+1) + diphosphate. Its function is as follows. DNA-dependent RNA polymerase catalyzes the transcription of DNA into RNA using the four ribonucleoside triphosphates as substrates. This Acidothermus cellulolyticus (strain ATCC 43068 / DSM 8971 / 11B) protein is DNA-directed RNA polymerase subunit beta'.